The chain runs to 151 residues: MNAYNKADSFSLESDSIKDVIHDYICWLSMTDEMRPSIGNVFKAMETFKIDAVRYYDGNIYELAKDINAMSFDGFIRSLQTIASKKDKLTVYGTMGLLSIVVDINKGCDISNIKFAAGIIILMEYIFDDTDMSHLKVALYRRIQRRDDVDR.

This sequence belongs to the orthopoxvirus OPG029 family. As to quaternary structure, interacts with host TANK, TBKBP1 and AZI2; these interactions prevent interferon production. Interacts with host STAT2.

Its function is as follows. Prevents establishment of cellular antiviral state by blocking virus-induced phosphorylation and activation of interferon regulatory factors 3/IRF3 and 7/IRF7, transcription factors critical for the induction of interferons alpha and beta. This blockage is produced through the inhibition of host TBK1, by binding host TBK1 adapter proteins TBKBP1 and AZI2, thereby producing a strong inhibition of the phosphorylation and activation of IRF3 and IRF7. Also acts as an inhibitor of the cellular response to type I IFN by interacting with host STAT2. Mechanistically, exerts its inhibitory effect after host ISGF3 complex (composed of STAT1, STAT2 and IRF9) binding to the interferon stimulated response element (ISRE). This chain is IFN signaling evasion protein OPG029 (OPG029), found in Vaccinia virus (strain Western Reserve) (VACV).